The sequence spans 39 residues: Omega-theraphotoxin-Ba1b (39 aa).

Cystine bridges form between cysteine 4–cysteine 17, cysteine 8–cysteine 31, and cysteine 25–cysteine 36.

Belongs to the neurotoxin 12 (Hwtx-2) family. 06 (TXP1) subfamily. In terms of tissue distribution, expressed by the venom gland.

The protein resides in the secreted. In terms of biological role, inhibits voltage-gated calcium channels (Cav) in rat cerebellar granule cells. Has insecticidal activity to crickets (Acheta domesticus). Is not toxic to mice. This chain is Omega-theraphotoxin-Ba1b, found in Brachypelma albiceps (Mexican golden redrump tarantula).